We begin with the raw amino-acid sequence, 151 residues long: Protein NrdI (151 aa).

The protein belongs to the NrdI family.

In terms of biological role, probably involved in ribonucleotide reductase function. The sequence is that of Protein NrdI from Mycoplasmopsis pulmonis (strain UAB CTIP) (Mycoplasma pulmonis).